The chain runs to 494 residues: UPF0371 protein stu1377 (494 aa).

It belongs to the UPF0371 family.

The sequence is that of UPF0371 protein stu1377 from Streptococcus thermophilus (strain ATCC BAA-250 / LMG 18311).